Consider the following 346-residue polypeptide: Acetyl-coenzyme A carboxylase carboxyl transferase subunit beta (346 aa).

One can recognise a CoA carboxyltransferase N-terminal domain in the interval 24 to 292; the sequence is LWIKCPKSGD…LPEVEPIAVA (269 aa). Over residues 300–311 the composition is skewed to acidic residues; it reads AEAEAAPDEVVE. Residues 300–346 are disordered; the sequence is AEAEAAPDEVVEVEAPAVDEIVEEKPAATKAKPRSKAKSKAAPKTDE. The span at 330 to 340 shows a compositional bias: basic residues; the sequence is AKPRSKAKSKA.

The protein belongs to the AccD/PCCB family. In terms of assembly, acetyl-CoA carboxylase is a heterohexamer composed of biotin carboxyl carrier protein (AccB), biotin carboxylase (AccC) and two subunits each of ACCase subunit alpha (AccA) and ACCase subunit beta (AccD).

The protein resides in the cytoplasm. It carries out the reaction N(6)-carboxybiotinyl-L-lysyl-[protein] + acetyl-CoA = N(6)-biotinyl-L-lysyl-[protein] + malonyl-CoA. It participates in lipid metabolism; malonyl-CoA biosynthesis; malonyl-CoA from acetyl-CoA: step 1/1. In terms of biological role, component of the acetyl coenzyme A carboxylase (ACC) complex. Biotin carboxylase (BC) catalyzes the carboxylation of biotin on its carrier protein (BCCP) and then the CO(2) group is transferred by the transcarboxylase to acetyl-CoA to form malonyl-CoA. The sequence is that of Acetyl-coenzyme A carboxylase carboxyl transferase subunit beta from Hirschia baltica (strain ATCC 49814 / DSM 5838 / IFAM 1418).